The chain runs to 150 residues: Ribonuclease pancreatic delta-type (150 aa).

Positions 1-25 (MGLEKSFILFSLLVLVLGWVQPSLG) are cleaved as a signal peptide. Residue arginine 35 participates in substrate binding. Histidine 37 (proton acceptor) is an active-site residue. 3 disulfides stabilise this stretch: cysteine 51–cysteine 110, cysteine 65–cysteine 121, and cysteine 83–cysteine 136. Residues 66 to 70 (KRVNT), lysine 91, and arginine 111 contribute to the substrate site. The active-site Proton donor is histidine 145.

This sequence belongs to the pancreatic ribonuclease family. In terms of assembly, monomer.

It is found in the secreted. The enzyme catalyses an [RNA] containing cytidine + H2O = an [RNA]-3'-cytidine-3'-phosphate + a 5'-hydroxy-ribonucleotide-3'-[RNA].. It catalyses the reaction an [RNA] containing uridine + H2O = an [RNA]-3'-uridine-3'-phosphate + a 5'-hydroxy-ribonucleotide-3'-[RNA].. Endonuclease that catalyzes the cleavage of RNA on the 3' side of pyrimidine nucleotides. Acts on single-stranded and double-stranded RNA. The protein is Ribonuclease pancreatic delta-type of Rattus rattus (Black rat).